The sequence spans 101 residues: Small ribosomal subunit protein uS14 (101 aa).

Belongs to the universal ribosomal protein uS14 family. Part of the 30S ribosomal subunit. Contacts proteins S3 and S10.

Binds 16S rRNA, required for the assembly of 30S particles and may also be responsible for determining the conformation of the 16S rRNA at the A site. This Burkholderia mallei (strain NCTC 10247) protein is Small ribosomal subunit protein uS14.